A 748-amino-acid chain; its full sequence is E3 ubiquitin-protein ligase SMURF2 (748 aa).

Positions 1–119 constitute a C2 domain; the sequence is MSNPGGRRNG…TGYQRLDLCK (119 aa). A Glycyl lysine isopeptide (Lys-Gly) (interchain with G-Cter in ubiquitin) cross-link involves residue Lys119. 3 WW domains span residues 157-190, 251-284, and 297-330; these read NDLP…RPTR, PDLP…DPRV, and GPLP…DPRL. Residues 414 to 748 form the HECT domain; sequence RPKDLWKRLM…IEETCGFAVE (335 aa). The active-site Glycyl thioester intermediate is the Cys716.

As to quaternary structure, interacts (via WW domains) with SMAD1. Interacts (via WW domains) with SMAD2 (via PY-motif). Interacts (via WW domains) with SMAD3 (via PY-motif). Interacts with SMAD6. Interacts with SMAD7 (via PY-motif) and TGFBR1; SMAD7 recruits SMURF2 to the TGF-beta receptor and regulates its degradation. Does not interact with SMAD4; SMAD4 lacks a PY-motif. Interacts with AIMP1. Interacts with SNON. Interacts with STAMBP and RNF11. May interact with NDFIP1 and NDFIP2; this interaction induces the E3 ubiquitin-protein ligase activity. Interacts with TTC3. In terms of assembly, (Microbial infection) Interacts (via WW domains) with EBOV and MARV VP40 (via PPXY motif); the interaction facilitates VP40 virus-like particle budding. In terms of processing, auto-ubiquitinated and ubiquitinated in the presence of RNF11 and UBE2D1. Ubiquitinated by the SCF(FBXL15) complex and TTC3, leading to its degradation by the proteasome. 'Lys-48'-linked polyubiquitination mediated by TRAF4 at Lys-119 leads to SMURF2 proteasomal degradation. In terms of tissue distribution, widely expressed.

The protein resides in the nucleus. It localises to the cytoplasm. The protein localises to the cell membrane. Its subcellular location is the membrane raft. It catalyses the reaction S-ubiquitinyl-[E2 ubiquitin-conjugating enzyme]-L-cysteine + [acceptor protein]-L-lysine = [E2 ubiquitin-conjugating enzyme]-L-cysteine + N(6)-ubiquitinyl-[acceptor protein]-L-lysine.. Its pathway is protein modification; protein ubiquitination. With respect to regulation, activated by NDFIP1- and NDFIP2-binding. Its function is as follows. E3 ubiquitin-protein ligase which accepts ubiquitin from an E2 ubiquitin-conjugating enzyme in the form of a thioester and then directly transfers the ubiquitin to targeted substrates. Interacts with SMAD7 to trigger SMAD7-mediated transforming growth factor beta/TGF-beta receptor ubiquitin-dependent degradation, thereby down-regulating TGF-beta signaling. In addition, interaction with SMAD7 activates autocatalytic degradation, which is prevented by interaction with AIMP1. Also forms a stable complex with TGF-beta receptor-mediated phosphorylated SMAD1, SMAD2 and SMAD3, and targets SMAD1 and SMAD2 for ubiquitination and proteasome-mediated degradation. SMAD2 may recruit substrates, such as SNON, for ubiquitin-dependent degradation. Negatively regulates TGFB1-induced epithelial-mesenchymal transition and myofibroblast differentiation. (Microbial infection) In case of filoviruses Ebola/EBOV and Marburg/MARV infection, the complex formed by viral matrix protein VP40 and SMURF2 facilitates virus budding. This chain is E3 ubiquitin-protein ligase SMURF2, found in Homo sapiens (Human).